A 150-amino-acid chain; its full sequence is Large ribosomal subunit protein bL9 (150 aa).

Belongs to the bacterial ribosomal protein bL9 family.

Its function is as follows. Binds to the 23S rRNA. The sequence is that of Large ribosomal subunit protein bL9 from Streptococcus equi subsp. zooepidemicus (strain MGCS10565).